The chain runs to 162 residues: Nucleotide-binding protein Adeh_0094 (162 aa).

The protein belongs to the YajQ family.

Nucleotide-binding protein. The sequence is that of Nucleotide-binding protein Adeh_0094 from Anaeromyxobacter dehalogenans (strain 2CP-C).